Here is a 426-residue protein sequence, read N- to C-terminus: Mediator of RNA polymerase II transcription subunit 1 (426 aa).

Residues isoleucine 319 to methionine 349 are disordered. The span at serine 336 to aspartate 347 shows a compositional bias: polar residues.

Belongs to the Mediator complex subunit 1 family. Component of the Mediator complex.

Its subcellular location is the nucleus. Component of the Mediator complex, a coactivator involved in the regulated transcription of nearly all RNA polymerase II-dependent genes. Mediator functions as a bridge to convey information from gene-specific regulatory proteins to the basal RNA polymerase II transcription machinery. Mediator is recruited to promoters by direct interactions with regulatory proteins and serves as a scaffold for the assembly of a functional preinitiation complex with RNA polymerase II and the general transcription factors. The protein is Mediator of RNA polymerase II transcription subunit 1 (MED1) of Kluyveromyces lactis (strain ATCC 8585 / CBS 2359 / DSM 70799 / NBRC 1267 / NRRL Y-1140 / WM37) (Yeast).